The following is a 160-amino-acid chain: Lipoprotein signal peptidase (160 aa).

The next 2 membrane-spanning stretches (helical) occupy residues 63 to 83 (YRLP…AVTF) and 89 to 109 (DQHL…GNLI). Active-site residues include Asp-119 and Asp-137. A helical membrane pass occupies residues 132–152 (AFNVADSAICVGVALLAVDMI).

It belongs to the peptidase A8 family.

It is found in the cell inner membrane. It carries out the reaction Release of signal peptides from bacterial membrane prolipoproteins. Hydrolyzes -Xaa-Yaa-Zaa-|-(S,diacylglyceryl)Cys-, in which Xaa is hydrophobic (preferably Leu), and Yaa (Ala or Ser) and Zaa (Gly or Ala) have small, neutral side chains.. The protein operates within protein modification; lipoprotein biosynthesis (signal peptide cleavage). This protein specifically catalyzes the removal of signal peptides from prolipoproteins. The protein is Lipoprotein signal peptidase of Geobacter sulfurreducens (strain ATCC 51573 / DSM 12127 / PCA).